Consider the following 165-residue polypeptide: Lipoprotein signal peptidase (165 aa).

3 helical membrane-spanning segments follow: residues 9–29 (FLAI…VLLY), 69–89 (KYFL…FLFL), and 98–118 (IRFS…DIVF). Catalysis depends on residues D124 and D142. Residues 133–153 (WFFPTFNFADIFISLGTLIFI) traverse the membrane as a helical segment.

This sequence belongs to the peptidase A8 family.

Its subcellular location is the cell inner membrane. It carries out the reaction Release of signal peptides from bacterial membrane prolipoproteins. Hydrolyzes -Xaa-Yaa-Zaa-|-(S,diacylglyceryl)Cys-, in which Xaa is hydrophobic (preferably Leu), and Yaa (Ala or Ser) and Zaa (Gly or Ala) have small, neutral side chains.. The protein operates within protein modification; lipoprotein biosynthesis (signal peptide cleavage). Its function is as follows. This protein specifically catalyzes the removal of signal peptides from prolipoproteins. This is Lipoprotein signal peptidase from Chlamydia abortus (strain DSM 27085 / S26/3) (Chlamydophila abortus).